The sequence spans 281 residues: Diaminopimelate epimerase (281 aa).

2 residues coordinate substrate: asparagine 13 and asparagine 66. The active-site Proton donor is the cysteine 75. Substrate is bound by residues glycine 76–asparagine 77, asparagine 164, asparagine 197, and glutamate 215–arginine 216. Cysteine 224 acts as the Proton acceptor in catalysis. Glycine 225–threonine 226 serves as a coordination point for substrate.

This sequence belongs to the diaminopimelate epimerase family. Homodimer.

The protein localises to the cytoplasm. It catalyses the reaction (2S,6S)-2,6-diaminopimelate = meso-2,6-diaminopimelate. The protein operates within amino-acid biosynthesis; L-lysine biosynthesis via DAP pathway; DL-2,6-diaminopimelate from LL-2,6-diaminopimelate: step 1/1. Catalyzes the stereoinversion of LL-2,6-diaminopimelate (L,L-DAP) to meso-diaminopimelate (meso-DAP), a precursor of L-lysine and an essential component of the bacterial peptidoglycan. This chain is Diaminopimelate epimerase, found in Microcystis aeruginosa (strain NIES-843 / IAM M-2473).